A 662-amino-acid polypeptide reads, in one-letter code: Hypoxia-inducible factor 3-alpha (662 aa).

Residues 1 to 25 (MDWDQDRSSTELRKEKSRDAARSRR) form a disordered region. In terms of domain architecture, bHLH spans 12–65 (LRKEKSRDAARSRRSQETEVLYQLAHTLPFARGVSAHLDKASIMRLTISYLRMH). A nuclear localization signal region spans residues 75-98 (QVRKEGEPLDACYLKALEGFVMVL). 2 PAS domains span residues 80–150 (GEPL…PSLS) and 225–295 (PHPA…LSKG). The tract at residues 228-272 (ASLEPPLGRGAFLSRHSLDMKFTYCDERIAEVAGYSPDDLIGCSA) is nuclear export signal. The disordered stretch occupies residues 352–379 (EQTEQHTRRPPQLGTSSKKGIPGNSLDP). The short motif at 410–413 (LRRL) is the LRRLL element. 2 disordered regions span residues 417–445 (ILDGPPTAATPSTPQAARRPQSPLPADLP) and 459–480 (STARKNKTMETDLDIAQDPDTP). Low complexity predominate over residues 421-433 (PPTAATPSTPQAA). An ODD region spans residues 448-581 (LAVGLENAHR…SEDKGLELLE (134 aa)). The tract at residues 450–501 (VGLENAHRLSTARKNKTMETDLDIAQDPDTPDLEMLAPYISMDDDFQLNSSE) is NTAD. Lys463 participates in a covalent cross-link: Glycyl lysine isopeptide (Lys-Gly) (interchain with G-Cter in ubiquitin). The segment covering 469-480 (TDLDIAQDPDTP) has biased composition (acidic residues). An LAPYISMD motif is present at residues 485–492 (LAPYISMD). Pro487 is modified (4-hydroxyproline). Residues 500–595 (SEQLPKVHRR…KRSPRLEPGS (96 aa)) are disordered. Over residues 505 to 521 (KVHRRPPRTARRPRARS) the composition is skewed to basic residues. A Glycyl lysine isopeptide (Lys-Gly) (interchain with G-Cter in ubiquitin) cross-link involves residue Lys565. Basic and acidic residues predominate over residues 572–584 (SEDKGLELLETKP).

In terms of assembly, interacts with ARNT, BAD, BCL2L2, EPAS1, HIF1A, MCL1 and VHL. In normoxia, hydroxylated on Pro-487 in the oxygen-dependent degradation domain (ODD) by PHD. The hydroxylated proline promotes interaction with VHL, initiating rapid ubiquitination and subsequent proteasomal degradation. In terms of processing, ubiquitinated; ubiquitination occurs in a VHL- and oxygen-dependent pathway and subsequently targeted for proteasomal degradation. Expressed in the perivenous zone of the liver. Expressed in all tissues examined during normoxia. Expressed in brain and lung. Expressed in periportal and perivenous hepatocytes and in endothelial cells of the central vein (at protein level). Highest expression seen in the cerebral cortex, hippocampus, and lung. Low expression in myocardial tissue and liver.

The protein localises to the nucleus. It localises to the cytoplasm. It is found in the nucleus speckle. Its subcellular location is the mitochondrion. In terms of biological role, acts as a transcriptional regulator in adaptive response to low oxygen tension. Attenuates the ability of transcription factor HIF1A, EPAS1 and the HIF1A-ARNT complex to bind to hypoxia-responsive elements (HRE) located within the enhancer/promoter of hypoxia-inducible target genes and hence inhibits HRE-driven transcriptional activation. Functions as an inhibitor of angiogenesis in hypoxic cells of the cornea. Plays a role in the development of the cardiorespiratory system. May also be involved in apoptosis. May act as a tumor suppressor. In Rattus norvegicus (Rat), this protein is Hypoxia-inducible factor 3-alpha.